A 147-amino-acid chain; its full sequence is Large ribosomal subunit protein uL11 (147 aa).

It belongs to the universal ribosomal protein uL11 family. In terms of assembly, part of the ribosomal stalk of the 50S ribosomal subunit. Interacts with L10 and the large rRNA to form the base of the stalk. L10 forms an elongated spine to which L12 dimers bind in a sequential fashion forming a multimeric L10(L12)X complex. In terms of processing, one or more lysine residues are methylated.

Functionally, forms part of the ribosomal stalk which helps the ribosome interact with GTP-bound translation factors. This is Large ribosomal subunit protein uL11 from Phocaeicola vulgatus (strain ATCC 8482 / DSM 1447 / JCM 5826 / CCUG 4940 / NBRC 14291 / NCTC 11154) (Bacteroides vulgatus).